Reading from the N-terminus, the 173-residue chain is Adenine phosphoribosyltransferase (173 aa).

It belongs to the purine/pyrimidine phosphoribosyltransferase family. Homodimer.

Its subcellular location is the cytoplasm. It catalyses the reaction AMP + diphosphate = 5-phospho-alpha-D-ribose 1-diphosphate + adenine. It functions in the pathway purine metabolism; AMP biosynthesis via salvage pathway; AMP from adenine: step 1/1. Functionally, catalyzes a salvage reaction resulting in the formation of AMP, that is energically less costly than de novo synthesis. The chain is Adenine phosphoribosyltransferase from Methanococcus vannielii (strain ATCC 35089 / DSM 1224 / JCM 13029 / OCM 148 / SB).